The sequence spans 395 residues: 3-sulfinopropanoyl-CoA desulfinase (395 aa).

FAD is bound by residues 121 to 124, Ser-130, and 153 to 156; these read ICIS and YWIT. Residue 243 to 244 participates in substrate binding; it reads YN. FAD contacts are provided by residues Arg-272, Gln-339, Ser-343, 366-370, and Gln-387; that span reads GGTAQ.

It belongs to the acyl-CoA dehydrogenase family. Homotrimer or homotetramer. It depends on FAD as a cofactor.

The catalysed reaction is 3-sulfinopropanoyl-CoA + H2O = propanoyl-CoA + sulfite + H(+). In terms of biological role, catalyzes the conversion 3-sulfinopropanoyl-CoA (3SP-CoA) to propanoyl-CoA by abstraction of sulfite. Does not show dehydrogenase activity. This chain is 3-sulfinopropanoyl-CoA desulfinase, found in Cupriavidus necator (strain ATCC 43291 / DSM 13513 / CCUG 52238 / LMG 8453 / N-1) (Ralstonia eutropha).